The following is a 163-amino-acid chain: Small ribosomal subunit protein bS18c (163 aa).

Disordered regions lie at residues 1 to 52 (MYIS…IGPG) and 144 to 163 (NLRN…SSDC). Over residues 7–48 (PFRKSKQPFRKSKQPFHKSKQPFRKFKQPFRKSKQPFRRRSR) the composition is skewed to basic residues.

The protein belongs to the bacterial ribosomal protein bS18 family. Part of the 30S ribosomal subunit.

The protein localises to the plastid. It is found in the chloroplast. The chain is Small ribosomal subunit protein bS18c from Saccharum hybrid (Sugarcane).